Here is a 419-residue protein sequence, read N- to C-terminus: Ribosome biogenesis protein NOP53 (419 aa).

Disordered stretches follow at residues 1-21 and 233-283; these read MGIK…KNKR and KAFE…KIRQ. The segment covering 233–261 has biased composition (basic and acidic residues); that stretch reads KAFEDKGLVSDQDVNHSIDSDDQSEHEQA. Phosphoserine occurs at positions 242, 249, 252, and 256. Residues 269–283 are compositionally biased toward basic residues; it reads KNKRKTRSQRNKIRQ.

This sequence belongs to the NOP53 family.

The protein resides in the nucleus. It is found in the nucleolus. Its subcellular location is the nucleoplasm. Its function is as follows. May play a role in ribosome biogenesis. In Schizosaccharomyces pombe (strain 972 / ATCC 24843) (Fission yeast), this protein is Ribosome biogenesis protein NOP53.